Consider the following 361-residue polypeptide: Nicotinate-nucleotide--dimethylbenzimidazole phosphoribosyltransferase (361 aa).

E315 functions as the Proton acceptor in the catalytic mechanism.

This sequence belongs to the CobT family.

The enzyme catalyses 5,6-dimethylbenzimidazole + nicotinate beta-D-ribonucleotide = alpha-ribazole 5'-phosphate + nicotinate + H(+). Its pathway is nucleoside biosynthesis; alpha-ribazole biosynthesis; alpha-ribazole from 5,6-dimethylbenzimidazole: step 1/2. Catalyzes the synthesis of alpha-ribazole-5'-phosphate from nicotinate mononucleotide (NAMN) and 5,6-dimethylbenzimidazole (DMB). The polypeptide is Nicotinate-nucleotide--dimethylbenzimidazole phosphoribosyltransferase (Clostridium perfringens (strain ATCC 13124 / DSM 756 / JCM 1290 / NCIMB 6125 / NCTC 8237 / Type A)).